A 239-amino-acid polypeptide reads, in one-letter code: tRNA1(Val) (adenine(37)-N6)-methyltransferase (239 aa).

The protein belongs to the methyltransferase superfamily. tRNA (adenine-N(6)-)-methyltransferase family.

It is found in the cytoplasm. It catalyses the reaction adenosine(37) in tRNA1(Val) + S-adenosyl-L-methionine = N(6)-methyladenosine(37) in tRNA1(Val) + S-adenosyl-L-homocysteine + H(+). In terms of biological role, specifically methylates the adenine in position 37 of tRNA(1)(Val) (anticodon cmo5UAC). The chain is tRNA1(Val) (adenine(37)-N6)-methyltransferase from Trichodesmium erythraeum (strain IMS101).